The following is a 248-amino-acid chain: 3-deoxy-manno-octulosonate cytidylyltransferase (248 aa).

The protein belongs to the KdsB family.

The protein localises to the cytoplasm. It carries out the reaction 3-deoxy-alpha-D-manno-oct-2-ulosonate + CTP = CMP-3-deoxy-beta-D-manno-octulosonate + diphosphate. It functions in the pathway nucleotide-sugar biosynthesis; CMP-3-deoxy-D-manno-octulosonate biosynthesis; CMP-3-deoxy-D-manno-octulosonate from 3-deoxy-D-manno-octulosonate and CTP: step 1/1. Its pathway is bacterial outer membrane biogenesis; lipopolysaccharide biosynthesis. Its function is as follows. Activates KDO (a required 8-carbon sugar) for incorporation into bacterial lipopolysaccharide in Gram-negative bacteria. In Shigella boydii serotype 18 (strain CDC 3083-94 / BS512), this protein is 3-deoxy-manno-octulosonate cytidylyltransferase.